Reading from the N-terminus, the 475-residue chain is Ribulose bisphosphate carboxylase large chain (475 aa).

The propeptide occupies 1 to 2 (MS). Proline 3 carries the N-acetylproline modification. Lysine 14 carries the post-translational modification N6,N6,N6-trimethyllysine. Positions 123 and 173 each coordinate substrate. Residue lysine 175 is the Proton acceptor of the active site. Position 177 (lysine 177) interacts with substrate. Mg(2+)-binding residues include lysine 201, aspartate 203, and glutamate 204. At lysine 201 the chain carries N6-carboxylysine. The active-site Proton acceptor is histidine 294. Arginine 295, histidine 327, and serine 379 together coordinate substrate.

The protein belongs to the RuBisCO large chain family. Type I subfamily. In terms of assembly, heterohexadecamer of 8 large chains and 8 small chains; disulfide-linked. The disulfide link is formed within the large subunit homodimers. The cofactor is Mg(2+). Post-translationally, the disulfide bond which can form in the large chain dimeric partners within the hexadecamer appears to be associated with oxidative stress and protein turnover.

Its subcellular location is the plastid. It localises to the chloroplast. The enzyme catalyses 2 (2R)-3-phosphoglycerate + 2 H(+) = D-ribulose 1,5-bisphosphate + CO2 + H2O. The catalysed reaction is D-ribulose 1,5-bisphosphate + O2 = 2-phosphoglycolate + (2R)-3-phosphoglycerate + 2 H(+). RuBisCO catalyzes two reactions: the carboxylation of D-ribulose 1,5-bisphosphate, the primary event in carbon dioxide fixation, as well as the oxidative fragmentation of the pentose substrate in the photorespiration process. Both reactions occur simultaneously and in competition at the same active site. This Betula papyrifera (Paper birch) protein is Ribulose bisphosphate carboxylase large chain.